Reading from the N-terminus, the 292-residue chain is Ribosomal protein L11 methyltransferase (292 aa).

The S-adenosyl-L-methionine site is built by Thr136, Gly159, Asp181, and Asn228.

It belongs to the methyltransferase superfamily. PrmA family.

The protein resides in the cytoplasm. It catalyses the reaction L-lysyl-[protein] + 3 S-adenosyl-L-methionine = N(6),N(6),N(6)-trimethyl-L-lysyl-[protein] + 3 S-adenosyl-L-homocysteine + 3 H(+). Functionally, methylates ribosomal protein L11. This Rhizobium leguminosarum bv. trifolii (strain WSM2304) protein is Ribosomal protein L11 methyltransferase.